The sequence spans 37 residues: Cytochrome b6-f complex subunit 5 (37 aa).

A helical membrane pass occupies residues 5–25; sequence LLSGIVLGLMPVTLAGLFTTA.

The protein belongs to the PetG family. The 4 large subunits of the cytochrome b6-f complex are cytochrome b6, subunit IV (17 kDa polypeptide, PetD), cytochrome f and the Rieske protein, while the 4 small subunits are PetG, PetL, PetM and PetN. The complex functions as a dimer.

It is found in the plastid. The protein resides in the chloroplast thylakoid membrane. In terms of biological role, component of the cytochrome b6-f complex, which mediates electron transfer between photosystem II (PSII) and photosystem I (PSI), cyclic electron flow around PSI, and state transitions. PetG is required for either the stability or assembly of the cytochrome b6-f complex. The chain is Cytochrome b6-f complex subunit 5 from Ostreococcus tauri.